A 287-amino-acid chain; its full sequence is Uricase (287 aa).

Catalysis depends on charge relay system residues Lys11 and Thr58. The urate site is built by Thr58, Asp59, Phe160, Arg177, Val219, Gln220, and Asn246. His248 functions as the Charge relay system in the catalytic mechanism. Residues 285-287 (SRL) carry the Microbody targeting signal motif.

This sequence belongs to the uricase family.

It is found in the peroxisome. The enzyme catalyses urate + O2 + H2O = 5-hydroxyisourate + H2O2. It functions in the pathway purine metabolism; urate degradation; (S)-allantoin from urate: step 1/3. Its function is as follows. Catalyzes the oxidation of uric acid to 5-hydroxyisourate, which is further processed to form (S)-allantoin. This chain is Uricase (uox), found in Dictyostelium discoideum (Social amoeba).